Reading from the N-terminus, the 266-residue chain is ATP synthase subunit a (266 aa).

The next 6 helical transmembrane spans lie at 38–58 (KQML…LLAA), 99–119 (LLFS…IPLI), 126–146 (HVGG…AIGV), 162–182 (GVPV…NFLV), 191–211 (LFAT…GIEY), and 224–244 (SVLV…IMAL).

Belongs to the ATPase A chain family. As to quaternary structure, F-type ATPases have 2 components, CF(1) - the catalytic core - and CF(0) - the membrane proton channel. CF(1) has five subunits: alpha(3), beta(3), gamma(1), delta(1), epsilon(1). CF(0) has three main subunits: a(1), b(2) and c(9-12). The alpha and beta chains form an alternating ring which encloses part of the gamma chain. CF(1) is attached to CF(0) by a central stalk formed by the gamma and epsilon chains, while a peripheral stalk is formed by the delta and b chains.

The protein localises to the cell membrane. Functionally, key component of the proton channel; it plays a direct role in the translocation of protons across the membrane. The protein is ATP synthase subunit a of Arthrobacter sp. (strain FB24).